The following is a 317-amino-acid chain: Retinol dehydrogenase 7 (317 aa).

Residue 33-57 (FITGCDSGFGNLLARQLDRRGMRVL) coordinates NADP(+). Residue Ser-164 participates in substrate binding. Tyr-176 (proton acceptor) is an active-site residue.

It belongs to the short-chain dehydrogenases/reductases (SDR) family.

The protein localises to the microsome. Its subcellular location is the endoplasmic reticulum. It carries out the reaction all-trans-retinol--[retinol-binding protein] + NAD(+) = all-trans-retinal--[retinol-binding protein] + NADH + H(+). The protein operates within cofactor metabolism; retinol metabolism. Acts on retinol bound on cellular retinol-binding protein (CRBP). The sequence is that of Retinol dehydrogenase 7 from Rattus norvegicus (Rat).